The primary structure comprises 441 residues: MQVSLNPEWLARNNDEHKIRRNDHRSPFQRDRARILHSAAFRRLQAKTQVHGTSLNDFHRTRLTHSLEAAQIGTGIVAQIKLKQPEFRELLPSDSLIDSLCLAHDIGHPPYGHGGEIALNYMMRDHGGFEGNAQTFRIVTSLEPYTEHHGMNLSRRTLLGLLKYPALLSATRAAIPPPAVAHQRQLKAKDWSPAKGIYDCDLASLDWVLEPLCESDRELLGQMRAEPSSPKEHRKTRFKSLDCSIMELADDIAYGVHDLEDAIVLGMVTRAQWQEAAAAQLAECGDPWFEEHIAELSEMLFSGKHYVCKDAIGGIVNALLTSISVKPVEAPFHNELLAFNAYIEPHMGNALEVLKHFVSQYVIQIPQVQRFEYKGQQLIMDLFEALSADPERLLPQATGEKWRKAQEQDEGMRVICDYIAAMTDAYAQRLHQQLFSAQSHY.

In terms of domain architecture, HD spans 62–255 (RLTHSLEAAQ…MELADDIAYG (194 aa)).

Belongs to the dGTPase family. Type 2 subfamily.

The polypeptide is Deoxyguanosinetriphosphate triphosphohydrolase-like protein (dgt) (Vibrio cholerae serotype O1 (strain ATCC 39541 / Classical Ogawa 395 / O395)).